The sequence spans 430 residues: tRNA(Ile)-lysidine synthase (430 aa).

27–32 is an ATP binding site; the sequence is SGGSDS.

Belongs to the tRNA(Ile)-lysidine synthase family.

It is found in the cytoplasm. It carries out the reaction cytidine(34) in tRNA(Ile2) + L-lysine + ATP = lysidine(34) in tRNA(Ile2) + AMP + diphosphate + H(+). In terms of biological role, ligates lysine onto the cytidine present at position 34 of the AUA codon-specific tRNA(Ile) that contains the anticodon CAU, in an ATP-dependent manner. Cytidine is converted to lysidine, thus changing the amino acid specificity of the tRNA from methionine to isoleucine. This chain is tRNA(Ile)-lysidine synthase, found in Rickettsia felis (strain ATCC VR-1525 / URRWXCal2) (Rickettsia azadi).